Consider the following 394-residue polypeptide: Chorismate synthase (394 aa).

The NADP(+) site is built by R40 and R46. FMN contacts are provided by residues 135-137, 255-256, G302, 317-321, and R343; these read RAS, QA, and KPISS.

Belongs to the chorismate synthase family. As to quaternary structure, homotetramer. It depends on FMNH2 as a cofactor.

The enzyme catalyses 5-O-(1-carboxyvinyl)-3-phosphoshikimate = chorismate + phosphate. The protein operates within metabolic intermediate biosynthesis; chorismate biosynthesis; chorismate from D-erythrose 4-phosphate and phosphoenolpyruvate: step 7/7. In terms of biological role, catalyzes the anti-1,4-elimination of the C-3 phosphate and the C-6 proR hydrogen from 5-enolpyruvylshikimate-3-phosphate (EPSP) to yield chorismate, which is the branch point compound that serves as the starting substrate for the three terminal pathways of aromatic amino acid biosynthesis. This reaction introduces a second double bond into the aromatic ring system. The sequence is that of Chorismate synthase from Parafrankia sp. (strain EAN1pec).